The primary structure comprises 497 residues: Acetyltransferase FGR3 (497 aa).

Residues D221 and I224 each coordinate Ca(2+). The CoA site is built by K255 and D303. Position 386 (D386) interacts with Ca(2+). Residue T396 participates in CoA binding. D462 provides a ligand contact to Ca(2+). Residues D477–S497 form a disordered region. The segment covering N485–S497 has biased composition (low complexity).

The protein belongs to the trichothecene 3-O-acetyltransferase family.

It participates in secondary metabolite biosynthesis. In terms of biological role, acetyltransferase; part of the gene cluster that mediates the biosynthesis of the tetraketides fugralins such as linear fugralin A and cyclic fugralin B, volatile compounds that play a role in the asexual reproductive cycle but are not involved in pathogenicity. One of the key features of fugralins is the presence of a double methyl group, which is only rarely encountered in fungal secondary metabolites. As the fugralins cluster does not contain an independent methyltransferase, the PKS FGR1 is probably responsible for adding two methyl groups to the same carbon atom. Fugralin B is similar to fugralin A except for a cyclization between the carboxylic acid C-8 and the alcohol on C-4 resulting in a six membered lactone ring, probably catalyzed by the cyclase FGR4. The exact role of the individual cluster genes remains unknown and further work is needed to unravel the biosynthetic pathway. The chain is Acetyltransferase FGR3 from Gibberella zeae (strain ATCC MYA-4620 / CBS 123657 / FGSC 9075 / NRRL 31084 / PH-1) (Wheat head blight fungus).